Consider the following 246-residue polypeptide: Outer membrane protein assembly factor BamD (246 aa).

The first 22 residues, 1–22, serve as a signal peptide directing secretion; it reads MKKKNSIIFVFMILFFNSTVQS.

It belongs to the BamD family. In terms of assembly, part of the Bam complex.

It is found in the cell outer membrane. Its function is as follows. Part of the outer membrane protein assembly complex, which is involved in assembly and insertion of beta-barrel proteins into the outer membrane. The sequence is that of Outer membrane protein assembly factor BamD from Buchnera aphidicola subsp. Acyrthosiphon pisum (strain APS) (Acyrthosiphon pisum symbiotic bacterium).